A 486-amino-acid polypeptide reads, in one-letter code: Protein hold'em (486 aa).

The segment at residues 166–285 is a DNA-binding region (OB); sequence IITTNVNLLV…DCRLLLAFAA (120 aa).

This sequence belongs to the MEIOB family. In terms of assembly, interacts with mei-9 and Ercc1.

Functionally, single-stranded DNA-binding protein required for meiosis. May be involved in the resolution of recombination intermediates into crossovers in the meiotic recombination pathway. This chain is Protein hold'em (hdm), found in Drosophila melanogaster (Fruit fly).